We begin with the raw amino-acid sequence, 328 residues long: Methionyl-tRNA formyltransferase (328 aa).

(6S)-5,6,7,8-tetrahydrofolate is bound at residue 110–113; the sequence is SLLP.

It belongs to the Fmt family.

It catalyses the reaction L-methionyl-tRNA(fMet) + (6R)-10-formyltetrahydrofolate = N-formyl-L-methionyl-tRNA(fMet) + (6S)-5,6,7,8-tetrahydrofolate + H(+). Its function is as follows. Attaches a formyl group to the free amino group of methionyl-tRNA(fMet). The formyl group appears to play a dual role in the initiator identity of N-formylmethionyl-tRNA by promoting its recognition by IF2 and preventing the misappropriation of this tRNA by the elongation apparatus. The protein is Methionyl-tRNA formyltransferase of Prochlorococcus marinus (strain MIT 9215).